Here is a 244-residue protein sequence, read N- to C-terminus: Large ribosomal subunit protein uL3 (244 aa).

This sequence belongs to the universal ribosomal protein uL3 family. Part of the 50S ribosomal subunit. Forms a cluster with proteins L14 and L19.

Functionally, one of the primary rRNA binding proteins, it binds directly near the 3'-end of the 23S rRNA, where it nucleates assembly of the 50S subunit. This chain is Large ribosomal subunit protein uL3, found in Aquifex pyrophilus.